We begin with the raw amino-acid sequence, 284 residues long: MGLIIKGKPVADAISETLIKEVDNFKIQGIIPKLVIIRVGAKASDLAYEKGILKRCNGIGIETYVKEFPEDISQREFIRELRRLNEDRNVDGIMVFRPLPKHLDENIIKYVITPEKDIDCFNPINLAKVIAGDSTGFAPCTPRAVMEILKYYNIDVEGKFSVVIGRSMIVGKPMSMLLLNENSTVTTCHSKTVHLDKICSQADILVAGIGKAEFIDSKYIKEGAVVIDVGINVDKYGKLCGDVDIKSCQWKNVIVTPVPGGVGTVTSSVLAQHVVEACKHKNKL.

Residues 165-167 (GRS), Ser-190, and Ile-231 each bind NADP(+).

It belongs to the tetrahydrofolate dehydrogenase/cyclohydrolase family. Homodimer.

The enzyme catalyses (6R)-5,10-methylene-5,6,7,8-tetrahydrofolate + NADP(+) = (6R)-5,10-methenyltetrahydrofolate + NADPH. It carries out the reaction (6R)-5,10-methenyltetrahydrofolate + H2O = (6R)-10-formyltetrahydrofolate + H(+). It participates in one-carbon metabolism; tetrahydrofolate interconversion. Its function is as follows. Catalyzes the oxidation of 5,10-methylenetetrahydrofolate to 5,10-methenyltetrahydrofolate and then the hydrolysis of 5,10-methenyltetrahydrofolate to 10-formyltetrahydrofolate. This Clostridium kluyveri (strain ATCC 8527 / DSM 555 / NBRC 12016 / NCIMB 10680 / K1) protein is Bifunctional protein FolD.